Consider the following 185-residue polypeptide: Ribosome-recycling factor (185 aa).

This sequence belongs to the RRF family.

The protein localises to the cytoplasm. Its function is as follows. Responsible for the release of ribosomes from messenger RNA at the termination of protein biosynthesis. May increase the efficiency of translation by recycling ribosomes from one round of translation to another. This chain is Ribosome-recycling factor, found in Frankia casuarinae (strain DSM 45818 / CECT 9043 / HFP020203 / CcI3).